The sequence spans 507 residues: Maturase K (507 aa).

The protein belongs to the intron maturase 2 family. MatK subfamily.

The protein resides in the plastid. Its subcellular location is the chloroplast. Its function is as follows. Usually encoded in the trnK tRNA gene intron. Probably assists in splicing its own and other chloroplast group II introns. The protein is Maturase K of Fagopyrum esculentum (Common buckwheat).